The primary structure comprises 426 residues: Serine--tRNA ligase (426 aa).

Residue 233 to 235 (TAE) participates in L-serine binding. 264–266 (RSE) contacts ATP. Residue Glu287 participates in L-serine binding. ATP is bound at residue 351-354 (EISS). Residue Ser387 participates in L-serine binding.

The protein belongs to the class-II aminoacyl-tRNA synthetase family. Type-1 seryl-tRNA synthetase subfamily. Homodimer. The tRNA molecule binds across the dimer.

The protein resides in the cytoplasm. It catalyses the reaction tRNA(Ser) + L-serine + ATP = L-seryl-tRNA(Ser) + AMP + diphosphate + H(+). The enzyme catalyses tRNA(Sec) + L-serine + ATP = L-seryl-tRNA(Sec) + AMP + diphosphate + H(+). The protein operates within aminoacyl-tRNA biosynthesis; selenocysteinyl-tRNA(Sec) biosynthesis; L-seryl-tRNA(Sec) from L-serine and tRNA(Sec): step 1/1. In terms of biological role, catalyzes the attachment of serine to tRNA(Ser). Is also able to aminoacylate tRNA(Sec) with serine, to form the misacylated tRNA L-seryl-tRNA(Sec), which will be further converted into selenocysteinyl-tRNA(Sec). The protein is Serine--tRNA ligase of Pseudomonas putida (strain GB-1).